The sequence spans 361 residues: Putative F-box protein At3g18340 (361 aa).

Residues 1-46 (MASGKLPWELEEEILCRLPPGSLVRLRSVCKHWNDLYNDKWFIKKS) form the F-box domain.

The protein is Putative F-box protein At3g18340 of Arabidopsis thaliana (Mouse-ear cress).